Consider the following 367-residue polypeptide: MAFKLWLLDEETIYEHVFERYTQLEGQSGKLAQDLGIQDRRGGVLEITFEPSGLEGGRKKKRVRRRNKASSVEEDQNVAVDSYHVSVGQSISSLRSSRDNGNSTTGYVLWSTTPFFINWLLYSTSAAPFRLGSQVEVTCGSSCEGHKLELPRLVDLTGADRGKRGILELGAGISGILPVILGNFVDTYVSTDQKGILNKLKDNIMENLSQLTRKRCISRSLRLELPTVEPVGDADITAASLPSKSTLHLEVAALDWEKINLQDKKTHSLHPELSLIGETCSSVYVIAMDVIYNEYLIDPFLKTLKQLKHWLQTTYNLQFHVLVGIHLRSQEVTTLFLEKAIIEYDFTVYDIVDQVIQESRFNFYLIT.

S-adenosyl-L-methionine contacts are provided by residues Trp-110, 170 to 172, Asp-192, Trp-256, and Met-288; that span reads GAG.

It belongs to the class I-like SAM-binding methyltransferase superfamily. RKM5 family.

Its function is as follows. S-adenosyl-L-methionine-dependent protein-lysine N-methyltransferase that monomethylates 60S ribosomal protein L1 (RPL1A and RPL1B) at 'Lys-46'. The chain is Ribosomal lysine N-methyltransferase 5 (RKM5) from Saccharomyces cerevisiae (strain JAY291) (Baker's yeast).